A 245-amino-acid chain; its full sequence is Endogenous retrovirus group K member 5 Env polyprotein (245 aa).

The tract at residues 1-245 (MVTPVTWMDN…TLEFGLEIKL (245 aa)) is truncated surface protein.

This sequence belongs to the beta type-B retroviral envelope protein family. HERV class-II K(HML-2) env subfamily. Expressed in lung, placenta, testis, peripheral blood lymphocytes, and teratocarcinoma cell lines.

It is found in the virion. Functionally, retroviral envelope proteins mediate receptor recognition and membrane fusion during early infection. Endogenous envelope proteins may have kept, lost or modified their original function during evolution. This is Endogenous retrovirus group K member 5 Env polyprotein (ERVK-5) from Homo sapiens (Human).